A 665-amino-acid chain; its full sequence is FAD-dependent oxidoreductase domain-containing protein 2 (665 aa).

Residues 1-17 (MGPSGLLVALALHLAVC) form the signal peptide. N-linked (GlcNAc...) asparagine glycosylation occurs at Asn-136. Residues 642–665 (RWLGDHSTAPEPLTQSLDSNKEEL) form a disordered region. The short motif at 662–665 (KEEL) is the Prevents secretion from ER element.

The protein belongs to the FOXRED2 family. Interacts with SEL1L. May interact with OS9 and DNAJC10. Interacts with TXNDC16. The cofactor is FAD. N-glycosylated.

Its subcellular location is the endoplasmic reticulum lumen. Probable flavoprotein which may function in endoplasmic reticulum associated degradation (ERAD). May bind non-native proteins in the endoplasmic reticulum and target them to the ubiquitination machinery for subsequent degradation. The sequence is that of FAD-dependent oxidoreductase domain-containing protein 2 from Mus musculus (Mouse).